The chain runs to 1060 residues: FACT complex subunit SPT16 (1060 aa).

A disordered region spans residues Phe-458 to Glu-490. Positions Leu-478 to Glu-490 are enriched in polar residues. Positions Asn-508–Glu-532 form a coiled coil. Positions Gln-977–Asp-1060 are disordered. Acidic residues-rich tracts occupy residues Glu-979–Ser-990 and Glu-997–Asp-1044. A compositionally biased stretch (basic and acidic residues) spans Ala-1045 to Asp-1060.

It belongs to the peptidase M24 family. SPT16 subfamily. Forms a stable heterodimer with POB3. The SPT16-POB3 dimer weakly associates with multiple molecules of NHP6 to form the FACT complex.

The protein localises to the nucleus. Its subcellular location is the chromosome. Its function is as follows. Component of the FACT complex, a general chromatin factor that acts to reorganize nucleosomes. The FACT complex is involved in multiple processes that require DNA as a template such as mRNA elongation, DNA replication and DNA repair. During transcription elongation the FACT complex acts as a histone chaperone that both destabilizes and restores nucleosomal structure. It facilitates the passage of RNA polymerase II and transcription by promoting the dissociation of one histone H2A-H2B dimer from the nucleosome, then subsequently promotes the reestablishment of the nucleosome following the passage of RNA polymerase II. This is FACT complex subunit SPT16 (CDC68) from Candida albicans (strain SC5314 / ATCC MYA-2876) (Yeast).